We begin with the raw amino-acid sequence, 323 residues long: Replication factor C subunit 4 (323 aa).

Residues valine 12, valine 24, glycine 49–threonine 57, asparagine 145, and arginine 203 contribute to the ATP site.

This sequence belongs to the activator 1 small subunits family. Replication factor C (RFC) is a heteropentamer of subunits RFC1, RFC2, RFC3, RFC4 and RFC5 and forms a complex with POL30/PCNA in the presence of ATP. Component of the RAD24-RFC complex which consists of RAD14, RFC2, RFC3, RFC4 and RFC5 and associates with the checkpoint clamp DDC1:MEC3:RAD17 complex. Component of the ELG1-RFC complex which consists of ELG1, RFC2, RFC3, RFC4 and RFC5. Component of the CTF18-RFC complex, which consists of CTF18, CTF8, DCC1, RFC2, RFC3, RFC4 and RFC5. RFC4 interacts with ECO1.

It localises to the nucleus. Functionally, component of ATP-dependent clamp loader (RFC and RFC-like) complexes for DNA clamps, such as the POL30/PCNA homotrimer and the checkpoint clamp DDC1:MEC3:RAD17 complex. During a clamp loading circle, the RFC:clamp complex binds to DNA and the recognition of the double-stranded/single-stranded junction stimulates ATP hydrolysis by RFC. The complex presumably provides bipartite ATP sites in which one subunit supplies a catalytic site for hydrolysis of ATP bound to the neighboring subunit. Dissociation of RFC from the clamp leaves the clamp encircling DNA. Component of the replication factor C (RFC or activator 1) complex which loads POL30/PCNA and acts during elongation of primed DNA templates by DNA polymerase delta and epsilon. RFC has an essential but redundant activity in sister chromatid cohesion establishment. Component of the RFC-like complex CTF18-RFC which is required for efficient establishment of chromosome cohesion during S-phase and may load or unload POL30/PCNA. Component of the RFC-like RAD24-RFC complex which loads the checkpoint clamp DDC1:MEC3:RAD17 complex and is involved in DNA repair pathways. Component of the RFC-like ELG1-RFC complex which appears to have a role in DNA replication, replication fork re-start, recombination and repair. This Saccharomyces cerevisiae (strain ATCC 204508 / S288c) (Baker's yeast) protein is Replication factor C subunit 4 (RFC4).